A 379-amino-acid polypeptide reads, in one-letter code: Queuine tRNA-ribosyltransferase (379 aa).

Residue aspartate 94 is the Proton acceptor of the active site. Residues 94-98 (DSGGF), aspartate 148, glutamine 191, and glycine 218 each bind substrate. An RNA binding region spans residues 249 to 255 (GVGSPDS). The Nucleophile role is filled by aspartate 268. The interval 273 to 277 (TRIAR) is RNA binding; important for wobble base 34 recognition. Cysteine 306, cysteine 308, cysteine 311, and histidine 337 together coordinate Zn(2+).

It belongs to the queuine tRNA-ribosyltransferase family. As to quaternary structure, homodimer. Within each dimer, one monomer is responsible for RNA recognition and catalysis, while the other monomer binds to the replacement base PreQ1. Zn(2+) serves as cofactor.

The catalysed reaction is 7-aminomethyl-7-carbaguanine + guanosine(34) in tRNA = 7-aminomethyl-7-carbaguanosine(34) in tRNA + guanine. Its pathway is tRNA modification; tRNA-queuosine biosynthesis. In terms of biological role, catalyzes the base-exchange of a guanine (G) residue with the queuine precursor 7-aminomethyl-7-deazaguanine (PreQ1) at position 34 (anticodon wobble position) in tRNAs with GU(N) anticodons (tRNA-Asp, -Asn, -His and -Tyr). Catalysis occurs through a double-displacement mechanism. The nucleophile active site attacks the C1' of nucleotide 34 to detach the guanine base from the RNA, forming a covalent enzyme-RNA intermediate. The proton acceptor active site deprotonates the incoming PreQ1, allowing a nucleophilic attack on the C1' of the ribose to form the product. After dissociation, two additional enzymatic reactions on the tRNA convert PreQ1 to queuine (Q), resulting in the hypermodified nucleoside queuosine (7-(((4,5-cis-dihydroxy-2-cyclopenten-1-yl)amino)methyl)-7-deazaguanosine). The chain is Queuine tRNA-ribosyltransferase from Bacillus anthracis (strain CDC 684 / NRRL 3495).